The following is a 225-amino-acid chain: 7-cyano-7-deazaguanine synthase (225 aa).

9–19 is an ATP binding site; it reads YSGGLDSTTCL. Positions 188, 198, 201, and 204 each coordinate Zn(2+).

Belongs to the QueC family. Zn(2+) is required as a cofactor.

The enzyme catalyses 7-carboxy-7-deazaguanine + NH4(+) + ATP = 7-cyano-7-deazaguanine + ADP + phosphate + H2O + H(+). Its pathway is purine metabolism; 7-cyano-7-deazaguanine biosynthesis. Functionally, catalyzes the ATP-dependent conversion of 7-carboxy-7-deazaguanine (CDG) to 7-cyano-7-deazaguanine (preQ(0)). The sequence is that of 7-cyano-7-deazaguanine synthase from Citrifermentans bemidjiense (strain ATCC BAA-1014 / DSM 16622 / JCM 12645 / Bem) (Geobacter bemidjiensis).